The following is a 274-amino-acid chain: Pantothenate synthetase (274 aa).

An ATP-binding site is contributed by M27–H34. The active-site Proton donor is the H34. Q58 provides a ligand contact to (R)-pantoate. Q58 lines the beta-alanine pocket. Residue G145–D148 participates in ATP binding. (R)-pantoate is bound at residue Q151. L182–R185 is a binding site for ATP.

Belongs to the pantothenate synthetase family. Homodimer.

The protein localises to the cytoplasm. The catalysed reaction is (R)-pantoate + beta-alanine + ATP = (R)-pantothenate + AMP + diphosphate + H(+). It functions in the pathway cofactor biosynthesis; (R)-pantothenate biosynthesis; (R)-pantothenate from (R)-pantoate and beta-alanine: step 1/1. Catalyzes the condensation of pantoate with beta-alanine in an ATP-dependent reaction via a pantoyl-adenylate intermediate. The protein is Pantothenate synthetase of Wolinella succinogenes (strain ATCC 29543 / DSM 1740 / CCUG 13145 / JCM 31913 / LMG 7466 / NCTC 11488 / FDC 602W) (Vibrio succinogenes).